Reading from the N-terminus, the 469-residue chain is Glutamine synthetase (469 aa).

In terms of domain architecture, GS beta-grasp spans 13 to 97; sequence KEVRYVDLRF…LRCDIVEPAT (85 aa). Positions 105–469 constitute a GS catalytic domain; it reads PRSIAKRAEA…PVEFDMYYSL (365 aa). The Mg(2+) site is built by glutamate 130 and glutamate 132. Glutamate 208 contacts ATP. Mg(2+) contacts are provided by glutamate 213 and glutamate 221. L-glutamate-binding positions include 265 to 266 and glycine 266; that span reads NG. Histidine 270 contributes to the Mg(2+) binding site. ATP-binding positions include 272–274 and serine 274; that span reads HQS. The L-glutamate site is built by arginine 322, glutamate 328, and arginine 340. Arginine 340, arginine 345, and lysine 353 together coordinate ATP. Glutamate 358 lines the Mg(2+) pocket. Position 360 (arginine 360) interacts with L-glutamate. O-AMP-tyrosine is present on tyrosine 398.

Belongs to the glutamine synthetase family. In terms of assembly, oligomer of 12 subunits arranged in the form of two hexameric ring. Mg(2+) serves as cofactor.

The protein localises to the cytoplasm. It catalyses the reaction L-glutamate + NH4(+) + ATP = L-glutamine + ADP + phosphate + H(+). With respect to regulation, the activity of this enzyme could be controlled by adenylation under conditions of abundant glutamine. In terms of biological role, catalyzes the ATP-dependent biosynthesis of glutamine from glutamate and ammonia. The chain is Glutamine synthetase from Methylococcus capsulatus (strain ATCC 33009 / NCIMB 11132 / Bath).